Consider the following 62-residue polypeptide: [Ser6, Val10, Asp11]-phyllokinin (62 aa).

The first 22 residues, 1–22, serve as a signal peptide directing secretion; the sequence is MSFLKKSLLLVLFLGLVSFSIC. Residues 23–51 constitute a propeptide that is removed on maturation; sequence EEEKRETEEEENEDDMDEESEEKKRESPD. The tract at residues 24-62 is disordered; sequence EEKRETEEEENEDDMDEESEEKKRESPDRPPGFSPFRVD. Over residues 30–42 the composition is skewed to acidic residues; that stretch reads EEEENEDDMDEES.

The protein belongs to the frog skin active peptide (FSAP) family. Bradykinin-related peptide subfamily. In terms of tissue distribution, expressed by the skin glands.

Its subcellular location is the secreted. In terms of biological role, induces relaxation of rat smooth muscle from tail artery and contraction of that from ileum, urinary bladder and uterus. Binds to both bradykinin receptor B1 (BDKRB1) and B2 (BDKRB2). The sequence is that of [Ser6, Val10, Asp11]-phyllokinin from Agalychnis spurrelli (Gliding leaf frog).